The sequence spans 1448 residues: Gag-Pol polyprotein (1448 aa).

Gly2 carries the N-myristoyl glycine; by host lipid modification. The Nuclear export signal motif lies at 16–22 (LEKIRLR). A Nuclear localization signal motif is present at residues 26–32 (KKKYMLK). Over residues 218 to 227 (HPQQAPQQGQ) the composition is skewed to low complexity. The segment at 218–237 (HPQQAPQQGQLREPSGSDIA) is disordered. CCHC-type zinc fingers lie at residues 391–408 (IKCW…QCRA) and 412–429 (QGCW…KCPN). The interval 440–461 (LGKEAPQFPHGSSASGADANCS) is disordered. The 70-residue stretch at 517 to 586 (VEVLLDTGAD…TPINIFGRNL (70 aa)) folds into the Peptidase A2 domain. Catalysis depends on Asp522, which acts as the For protease activity; shared with dimeric partner. A Reverse transcriptase domain is found at 640–830 (DGQLEEAPPT…PPFQWMGYEL (191 aa)). 3 residues coordinate Mg(2+): Asp706, Asp781, and Asp782. The interval 823-831 (FQWMGYELW) is RT 'primer grip'. Residues 993 to 1009 (WEQWWTDYWQVTWIPEW) carry the Tryptophan repeat motif motif. Residues 1029 to 1152 (IEGEETYYVD…IDHLVSQGIR (124 aa)) enclose the RNase H type-1 domain. Asp1038, Glu1073, Asp1093, and Asp1144 together coordinate Mg(2+). The Integrase-type zinc-finger motif lies at 1158-1199 (EKIEPAQEEHSKYHSNIKELVFKFGLPRLVAKQIVDTCDKCH). Residues His1167, His1171, Cys1195, and Cys1198 each coordinate Zn(2+). Residues 1209–1359 (VNSDLGTWQM…TPAERLINMI (151 aa)) form the Integrase catalytic domain. Residues Asp1219 and Asp1271 each coordinate Mg(2+). A DNA-binding region (integrase-type) is located at residues 1378–1425 (FRVYYREGRDQLWKGPGELLWKGEGAVILKVGTDIKVVPRRKAKIIKD). The tract at residues 1426 to 1448 (YGGGKEMDSSSHMEDTGEAREVA) is disordered.

As to quaternary structure, homotrimer. Interacts with gp41 (via C-terminus). In terms of assembly, homodimer. The active site consists of two apposed aspartic acid residues. Heterodimer of p66 RT and p51 RT (RT p66/p51). Heterodimerization of RT is essential for DNA polymerase activity. Despite the sequence identities, p66 RT and p51 RT have distinct folding. As to quaternary structure, homotetramer; may further associate as a homohexadecamer. It depends on Mg(2+) as a cofactor. Specific enzymatic cleavages by the viral protease yield mature proteins. The protease is released by autocatalytic cleavage. The polyprotein is cleaved during and after budding, this process is termed maturation. Proteolytic cleavage of p66 RT removes the RNase H domain to yield the p51 RT subunit. In terms of processing, capsid protein p24 is phosphorylated.

Its subcellular location is the virion. The protein resides in the host nucleus. It is found in the host cytoplasm. The protein localises to the host cell membrane. It carries out the reaction Specific for a P1 residue that is hydrophobic, and P1' variable, but often Pro.. The enzyme catalyses Endohydrolysis of RNA in RNA/DNA hybrids. Three different cleavage modes: 1. sequence-specific internal cleavage of RNA. Human immunodeficiency virus type 1 and Moloney murine leukemia virus enzymes prefer to cleave the RNA strand one nucleotide away from the RNA-DNA junction. 2. RNA 5'-end directed cleavage 13-19 nucleotides from the RNA end. 3. DNA 3'-end directed cleavage 15-20 nucleotides away from the primer terminus.. The catalysed reaction is 3'-end directed exonucleolytic cleavage of viral RNA-DNA hybrid.. It catalyses the reaction DNA(n) + a 2'-deoxyribonucleoside 5'-triphosphate = DNA(n+1) + diphosphate. With respect to regulation, the viral protease is inhibited by many synthetic protease inhibitors (PIs), such as amprenavir, atazanavir, indinavir, loprinavir, nelfinavir, ritonavir and saquinavir. RT can be inhibited either by nucleoside RT inhibitors (NRTIs) or by non nucleoside RT inhibitors (NNRTIs). NRTIs act as chain terminators, whereas NNRTIs inhibit DNA polymerization by binding a small hydrophobic pocket near the RT active site and inducing an allosteric change in this region. Classical NRTIs are abacavir, adefovir (PMEA), didanosine (ddI), lamivudine (3TC), stavudine (d4T), tenofovir (PMPA), zalcitabine (ddC), and zidovudine (AZT). Classical NNRTIs are atevirdine (BHAP U-87201E), delavirdine, efavirenz (DMP-266), emivirine (I-EBU), and nevirapine (BI-RG-587). The tritherapies used as a basic effective treatment of AIDS associate two NRTIs and one NNRTI. Use of protease inhibitors in tritherapy regimens permit more ambitious therapeutic strategies. Functionally, gag-Pol polyprotein and Gag polyprotein may regulate their own translation, by the binding genomic RNA in the 5'-UTR. At low concentration, Gag-Pol and Gag would promote translation, whereas at high concentration, the polyproteins encapsidate genomic RNA and then shut off translation. Its function is as follows. Matrix protein p17 has two main functions: in infected cell, it targets Gag and Gag-pol polyproteins to the plasma membrane via a multipartite membrane-binding signal, that includes its myristointegration complex. The myristoylation signal and the NLS exert conflicting influences its subcellular localization. The key regulation of these motifs might be phosphorylation of a portion of MA molecules on the C-terminal tyrosine at the time of virus maturation, by virion-associated cellular tyrosine kinase. Implicated in the release from host cell mediated by Vpu. In terms of biological role, capsid protein p24 forms the conical core that encapsulates the genomic RNA-nucleocapsid complex in the virion. The core is constituted by capsid protein hexamer subunits. The core is disassembled soon after virion entry. Interaction with host PPIA/CYPA protects the virus from restriction by host TRIM5-alpha and from an unknown antiviral activity in host cells. This capsid restriction by TRIM5 is one of the factors which restricts SIV to the simian species. Nucleocapsid protein p7 encapsulates and protects viral dimeric unspliced (genomic) RNA. Binds these RNAs through its zinc fingers. Facilitates rearangement of nucleic acid secondary structure during retrotranscription of genomic RNA. This capability is referred to as nucleic acid chaperone activity. Functionally, the aspartyl protease mediates proteolytic cleavages of Gag and Gag-Pol polyproteins during or shortly after the release of the virion from the plasma membrane. Cleavages take place as an ordered, step-wise cascade to yield mature proteins. This process is called maturation. Displays maximal activity during the budding process just prior to particle release from the cell. Also cleaves Nef and Vif, probably concomitantly with viral structural proteins on maturation of virus particles. Hydrolyzes host EIF4GI and PABP1 in order to shut off the capped cellular mRNA translation. The resulting inhibition of cellular protein synthesis serves to ensure maximal viral gene expression and to evade host immune response. Its function is as follows. Reverse transcriptase/ribonuclease H (RT) is a multifunctional enzyme that converts the viral dimeric RNA genome into dsDNA in the cytoplasm, shortly after virus entry into the cell. This enzyme displays a DNA polymerase activity that can copy either DNA or RNA templates, and a ribonuclease H (RNase H) activity that cleaves the RNA strand of RNA-DNA heteroduplexes in a partially processive 3' to 5' endonucleasic mode. Conversion of viral genomic RNA into dsDNA requires many steps. A tRNA binds to the primer-binding site (PBS) situated at the 5'-end of the viral RNA. RT uses the 3' end of the tRNA primer to perform a short round of RNA-dependent minus-strand DNA synthesis. The reading proceeds through the U5 region and ends after the repeated (R) region which is present at both ends of viral RNA. The portion of the RNA-DNA heteroduplex is digested by the RNase H, resulting in a ssDNA product attached to the tRNA primer. This ssDNA/tRNA hybridizes with the identical R region situated at the 3' end of viral RNA. This template exchange, known as minus-strand DNA strong stop transfer, can be either intra- or intermolecular. RT uses the 3' end of this newly synthesized short ssDNA to perform the RNA-dependent minus-strand DNA synthesis of the whole template. RNase H digests the RNA template except for two polypurine tracts (PPTs) situated at the 5'-end and near the center of the genome. It is not clear if both polymerase and RNase H activities are simultaneous. RNase H can probably proceed both in a polymerase-dependent (RNA cut into small fragments by the same RT performing DNA synthesis) and a polymerase-independent mode (cleavage of remaining RNA fragments by free RTs). Secondly, RT performs DNA-directed plus-strand DNA synthesis using the PPTs that have not been removed by RNase H as primers. PPTs and tRNA primers are then removed by RNase H. The 3' and 5' ssDNA PBS regions hybridize to form a circular dsDNA intermediate. Strand displacement synthesis by RT to the PBS and PPT ends produces a blunt ended, linear dsDNA copy of the viral genome that includes long terminal repeats (LTRs) at both ends. In terms of biological role, integrase catalyzes viral DNA integration into the host chromosome, by performing a series of DNA cutting and joining reactions. This enzyme activity takes place after virion entry into a cell and reverse transcription of the RNA genome in dsDNA. The first step in the integration process is 3' processing. This step requires a complex comprising the viral genome, matrix protein, Vpr and integrase. This complex is called the pre-integration complex (PIC). The integrase protein removes 2 nucleotides from each 3' end of the viral DNA, leaving recessed CA OH's at the 3' ends. In the second step, the PIC enters cell nucleus. This process is mediated through integrase and Vpr proteins, and allows the virus to infect a non dividing cell. This ability to enter the nucleus is specific of lentiviruses, other retroviruses cannot and rely on cell division to access cell chromosomes. In the third step, termed strand transfer, the integrase protein joins the previously processed 3' ends to the 5' ends of strands of target cellular DNA at the site of integration. The 5'-ends are produced by integrase-catalyzed staggered cuts, 5 bp apart. A Y-shaped, gapped, recombination intermediate results, with the 5'-ends of the viral DNA strands and the 3' ends of target DNA strands remaining unjoined, flanking a gap of 5 bp. The last step is viral DNA integration into host chromosome. This involves host DNA repair synthesis in which the 5 bp gaps between the unjoined strands are filled in and then ligated. Since this process occurs at both cuts flanking the SIV genome, a 5 bp duplication of host DNA is produced at the ends of SIV integration. Alternatively, Integrase may catalyze the excision of viral DNA just after strand transfer, this is termed disintegration. The chain is Gag-Pol polyprotein (gag-pol) from Cercopithecidae (Old World monkeys).